The sequence spans 196 residues: Small ribosomal subunit protein uS4c (196 aa).

The tract at residues 16–36 is disordered; the sequence is GTLPGLTSKRPKSGSDLKTQL. The region spanning 89-150 is the S4 RNA-binding domain; the sequence is MRLDNILFRL…KQRSKALIQN (62 aa).

The protein belongs to the universal ribosomal protein uS4 family. Part of the 30S ribosomal subunit. Contacts protein S5. The interaction surface between S4 and S5 is involved in control of translational fidelity.

It localises to the plastid. Its subcellular location is the chloroplast. One of the primary rRNA binding proteins, it binds directly to 16S rRNA where it nucleates assembly of the body of the 30S subunit. Functionally, with S5 and S12 plays an important role in translational accuracy. The polypeptide is Small ribosomal subunit protein uS4c (rps4) (Rhapis humilis (Slender lady palm)).